Reading from the N-terminus, the 418-residue chain is Transmembrane protease serine 11A (418 aa).

The Cytoplasmic portion of the chain corresponds to 1-18 (MMYRTVGFGTRSRNLKPW). A helical; Signal-anchor for type II membrane protein membrane pass occupies residues 19 to 39 (MIAVLIVLSLTVVAVTIGLLV). Residues 40-418 (HFLVFDQKKE…RNWIASKTGI (379 aa)) are Extracellular-facing. The SEA domain maps to 47 to 164 (KKEYYHGSFK…SSVQVNAMSS (118 aa)). The N-linked (GlcNAc...) asparagine glycan is linked to N153. One can recognise a Peptidase S1 domain in the interval 187 to 417 (IASGVIAPKA…YRNWIASKTG (231 aa)). C212 and C228 are oxidised to a cystine. Active-site charge relay system residues include H227 and D272. An N-linked (GlcNAc...) asparagine glycan is attached at N303. 2 disulfides stabilise this stretch: C337–C353 and C364–C393. S368 (charge relay system) is an active-site residue.

This sequence belongs to the peptidase S1 family. As to quaternary structure, may interact with ZBTB17. In terms of tissue distribution, expressed in esophagus, liver, colon and lung. Down-regulated in esophagus cancers.

The protein localises to the membrane. Its function is as follows. Probable serine protease which may play a role in cellular senescence. Overexpression inhibits cell growth and induce G1 cell cycle arrest. This chain is Transmembrane protease serine 11A (TMPRSS11A), found in Homo sapiens (Human).